The following is a 111-amino-acid chain: Cytochrome c (111 aa).

Position 1 is an N-acetylalanine (A1). Positions 22, 25, and 26 each coordinate heme c. K80 carries the post-translational modification N6,N6,N6-trimethyllysine. M88 serves as a coordination point for heme c. An N6,N6,N6-trimethyllysine modification is found at K94.

Belongs to the cytochrome c family. In terms of processing, binds 1 heme c group covalently per subunit.

The protein localises to the mitochondrion intermembrane space. Its function is as follows. Electron carrier protein. The oxidized form of the cytochrome c heme group can accept an electron from the heme group of the cytochrome c1 subunit of cytochrome reductase. Cytochrome c then transfers this electron to the cytochrome oxidase complex, the final protein carrier in the mitochondrial electron-transport chain. This chain is Cytochrome c, found in Vigna radiata var. radiata (Mung bean).